The primary structure comprises 315 residues: Initiation factor TFIIB homolog (315 aa).

The protein belongs to the asfivirus C315R family.

Putative initation factor. This African swine fever virus (strain Badajoz 1971 Vero-adapted) (Ba71V) protein is Initiation factor TFIIB homolog.